Here is a 554-residue protein sequence, read N- to C-terminus: MSKQIVHSDQCRKKIIEGINVVANAVGITLGPKGRCVAIEQSYGPPKITKDGVSVAKAIQLKDKSLNVGAQFVISVASKTADVAGDGTTTATVIADAAVRELNKAEVAGIDIQEVRKGAEKAVEAVIADVRKNSSPVKNEEEIAQVATVSSNGDREIGEKIANAMKQVGQEGVITVEDSKNFNFEVEVVKGMRFDRGYISQYFATNREKMITEFENPYILLLDQKVSTVQPLVPVLEAVAHTGKPLVLIADDVDGEALTALILNNLKGSIKVVAVKAPGFGDRKKEMLEDIAILTNGEVITEQLGIKLEKVNDTSKLGTANRVIVTKDHTTIVHDKNNSDIEKKVNSRCEQIREAIKDTTSDYEKEKLQERLAKLRNGVAVLKVGGATEVEQKERKDRVEDALHATRAAVEEGIVPGGGVALFYASRVLDSLKFDNEDQRVGINIIKKVLEAPVRQIVKNAGGKEDVVVNELSKSNDKNRGFDARTMQYVDMIKAGIVDPTKVVRTALQDAFSVASLVIATSAMITDHEEDNNTNRSGGGVGGGHHGGMGGMDF.

ATP contacts are provided by residues threonine 29–proline 32, lysine 50, aspartate 86–threonine 90, glycine 418, and aspartate 499. Positions histidine 528–phenylalanine 554 are disordered. Residues serine 537–phenylalanine 554 show a composition bias toward gly residues.

The protein belongs to the chaperonin (HSP60) family. In terms of assembly, forms a cylinder of 14 subunits composed of two heptameric rings stacked back-to-back. Interacts with the co-chaperonin GroES.

Its subcellular location is the cytoplasm. The catalysed reaction is ATP + H2O + a folded polypeptide = ADP + phosphate + an unfolded polypeptide.. Together with its co-chaperonin GroES, plays an essential role in assisting protein folding. The GroEL-GroES system forms a nano-cage that allows encapsulation of the non-native substrate proteins and provides a physical environment optimized to promote and accelerate protein folding. The polypeptide is Chaperonin GroEL (Orientia tsutsugamushi (strain Boryong) (Rickettsia tsutsugamushi)).